The following is a 373-amino-acid chain: S-adenosylmethionine:tRNA ribosyltransferase-isomerase (373 aa).

This sequence belongs to the QueA family. As to quaternary structure, monomer.

It is found in the cytoplasm. The enzyme catalyses 7-aminomethyl-7-carbaguanosine(34) in tRNA + S-adenosyl-L-methionine = epoxyqueuosine(34) in tRNA + adenine + L-methionine + 2 H(+). It functions in the pathway tRNA modification; tRNA-queuosine biosynthesis. Functionally, transfers and isomerizes the ribose moiety from AdoMet to the 7-aminomethyl group of 7-deazaguanine (preQ1-tRNA) to give epoxyqueuosine (oQ-tRNA). In Rhizobium etli (strain CIAT 652), this protein is S-adenosylmethionine:tRNA ribosyltransferase-isomerase.